A 157-amino-acid polypeptide reads, in one-letter code: 2-C-methyl-D-erythritol 2,4-cyclodiphosphate synthase (157 aa).

The a divalent metal cation site is built by Asp-8 and His-10. 4-CDP-2-C-methyl-D-erythritol 2-phosphate-binding positions include 8–10 (DVH) and 34–35 (HS). Residue His-42 coordinates a divalent metal cation. 4-CDP-2-C-methyl-D-erythritol 2-phosphate contacts are provided by residues 56-58 (DIG), 61-65 (FPDTD), 100-106 (AQAPKMA), 132-135 (TTTE), Phe-139, and Arg-142.

Belongs to the IspF family. In terms of assembly, homotrimer. A divalent metal cation serves as cofactor.

The catalysed reaction is 4-CDP-2-C-methyl-D-erythritol 2-phosphate = 2-C-methyl-D-erythritol 2,4-cyclic diphosphate + CMP. It participates in isoprenoid biosynthesis; isopentenyl diphosphate biosynthesis via DXP pathway; isopentenyl diphosphate from 1-deoxy-D-xylulose 5-phosphate: step 4/6. Involved in the biosynthesis of isopentenyl diphosphate (IPP) and dimethylallyl diphosphate (DMAPP), two major building blocks of isoprenoid compounds. Catalyzes the conversion of 4-diphosphocytidyl-2-C-methyl-D-erythritol 2-phosphate (CDP-ME2P) to 2-C-methyl-D-erythritol 2,4-cyclodiphosphate (ME-CPP) with a corresponding release of cytidine 5-monophosphate (CMP). The polypeptide is 2-C-methyl-D-erythritol 2,4-cyclodiphosphate synthase (Pseudomonas putida (strain ATCC 700007 / DSM 6899 / JCM 31910 / BCRC 17059 / LMG 24140 / F1)).